The following is a 373-amino-acid chain: MKIVVDENMPLAEALFAEFGEVVRVPGRTMTAEQLADADILLVRSVTKVNAALLSQATNLKFVGTATIGTDHIDKAVLAEKGINFTSAPGCNKVSVGEYIISALLVMAEKYQFSLSGLSLGVIGAGNTGTAVAERASALGIEVKLCDPLKEQAGDPRSFVSYDEALQCDLISFHVPLSREGEHATFHLLDKKYIQALRSEQILLNASRGEVWDNQAMLLRQQSAEPLLLVMDVWENEPDILHELVPYTDIATPHIAGYSLEGKYRGTYMLYEAFCQQFGYTVTKQLKQLLPVADINALTLNANTDEVVLKKLIHLVYDVRRDDARFRHQIGLPGRFDEMRKKYPERREWSSVTISSEQNNDELVKLGFSVSGN.

Positions 45 and 67 each coordinate substrate. NAD(+) is bound by residues Asp147, 206-208, and Asp232; that span reads ASR. Residue Arg208 is part of the active site. Glu237 is a catalytic residue. Residue His254 is the Proton donor of the active site. An NAD(+)-binding site is contributed by Gly257. Substrate is bound at residue Tyr258.

This sequence belongs to the D-isomer specific 2-hydroxyacid dehydrogenase family. PdxB subfamily. In terms of assembly, homodimer.

It localises to the cytoplasm. It catalyses the reaction 4-phospho-D-erythronate + NAD(+) = (R)-3-hydroxy-2-oxo-4-phosphooxybutanoate + NADH + H(+). It functions in the pathway cofactor biosynthesis; pyridoxine 5'-phosphate biosynthesis; pyridoxine 5'-phosphate from D-erythrose 4-phosphate: step 2/5. Functionally, catalyzes the oxidation of erythronate-4-phosphate to 3-hydroxy-2-oxo-4-phosphonooxybutanoate. The polypeptide is Erythronate-4-phosphate dehydrogenase (Tolumonas auensis (strain DSM 9187 / NBRC 110442 / TA 4)).